The primary structure comprises 282 residues: Putative phosphoenolpyruvate synthase regulatory protein (282 aa).

161–168 (GVSRSGKT) serves as a coordination point for ADP.

This sequence belongs to the pyruvate, phosphate/water dikinase regulatory protein family. PSRP subfamily.

The enzyme catalyses [pyruvate, water dikinase] + ADP = [pyruvate, water dikinase]-phosphate + AMP + H(+). It carries out the reaction [pyruvate, water dikinase]-phosphate + phosphate + H(+) = [pyruvate, water dikinase] + diphosphate. Its function is as follows. Bifunctional serine/threonine kinase and phosphorylase involved in the regulation of the phosphoenolpyruvate synthase (PEPS) by catalyzing its phosphorylation/dephosphorylation. This Janthinobacterium sp. (strain Marseille) (Minibacterium massiliensis) protein is Putative phosphoenolpyruvate synthase regulatory protein.